Here is a 318-residue protein sequence, read N- to C-terminus: MTCKIIGCGGYLPSKIVSNDELAKFVDTNDEWIRTRTGITQRHIAGDTEYTSHLALKSAEKAIADAGISVNDIDLIITCTTTPDNSFPSVASKLQGYLGLTNIPSFDLQAVCAGFVYGLQVANSLISSDKYKTILLIGAEKMTSLLDWNDRTTCVLFGDGAGSVILQRSSDDSGLIDSNIFSSGADYDEILYTNGGVSMNGISGKIVMQGQKLFRHAIEKMQQSIKDLLHANQFSVSDIDYFIPHQANIRIINKLAELLNIEEHKVVKTVDKHANCSAASIPLALSTLKASGKIKKGDILLFSAIGAGLTWGSAFIRW.

Active-site residues include C112 and H245. The segment at 246–250 (QANIR) is ACP-binding. N275 is a catalytic residue.

This sequence belongs to the thiolase-like superfamily. FabH family. In terms of assembly, homodimer.

The protein resides in the cytoplasm. The enzyme catalyses malonyl-[ACP] + acetyl-CoA + H(+) = 3-oxobutanoyl-[ACP] + CO2 + CoA. It participates in lipid metabolism; fatty acid biosynthesis. Its function is as follows. Catalyzes the condensation reaction of fatty acid synthesis by the addition to an acyl acceptor of two carbons from malonyl-ACP. Catalyzes the first condensation reaction which initiates fatty acid synthesis and may therefore play a role in governing the total rate of fatty acid production. Possesses both acetoacetyl-ACP synthase and acetyl transacylase activities. Its substrate specificity determines the biosynthesis of branched-chain and/or straight-chain of fatty acids. This is Beta-ketoacyl-[acyl-carrier-protein] synthase III from Rickettsia conorii (strain ATCC VR-613 / Malish 7).